The primary structure comprises 114 residues: Prefoldin subunit 6 (114 aa).

Position 2 is an N-acetylserine (Ser2).

It belongs to the prefoldin subunit beta family. Heterohexamer of two PFD-alpha type and four PFD-beta type subunits.

The protein resides in the nucleus. In terms of biological role, binds specifically to cytosolic chaperonin (c-CPN) and transfers target proteins to it. Binds to nascent polypeptide chain and promotes folding in an environment in which there are many competing pathways for nonnative proteins. In Saccharomyces cerevisiae (strain ATCC 204508 / S288c) (Baker's yeast), this protein is Prefoldin subunit 6 (YKE2).